Consider the following 435-residue polypeptide: E3 ubiquitin-protein ligase RING1 (435 aa).

The segment at Cys46 to Arg86 adopts an RING-type zinc-finger fold. The disordered stretch occupies residues Lys144–Gly322. Residues Lys157–Asn170 are compositionally biased toward gly residues. Composition is skewed to low complexity over residues Gly171 to Gly188, Ser202 to Ser211, Ser222 to Thr251, and Ser259 to Ser278. Residue Ser202 is modified to Phosphoserine. A Phosphoserine modification is found at Ser266. Thr267 is subject to Phosphothreonine. Ser269 is subject to Phosphoserine. Acidic residues predominate over residues Ser309–Gly322.

Interacts with ORD. Component of PRC1 complex, which contains many PcG proteins like Pc, ph, Scm, Psc, Sce and also chromatin remodeling proteins such as histone deacetylases. This complex is distinct from the Esc/E(z) complex, at least composed of esc, E(z), Su(z)12, HDAC1/Rpd3 and Caf1-55. The two complexes however cooperate and interact together during the first 3 hours of development to establish PcG silencing. Ubiquitously expressed in syncytial blastoderm embryos. Ubiquitously expressed until stage 11. Then, it is only expressed in the neuroectoderm. Later in embryonic development, it is only expressed in the CNS. In larvae, it is expressed in all imaginal disks. Expressed in the male and female gonads.

Its subcellular location is the nucleus. It localises to the chromosome. It catalyses the reaction S-ubiquitinyl-[E2 ubiquitin-conjugating enzyme]-L-cysteine + [acceptor protein]-L-lysine = [E2 ubiquitin-conjugating enzyme]-L-cysteine + N(6)-ubiquitinyl-[acceptor protein]-L-lysine.. Its pathway is protein modification; protein ubiquitination. Its function is as follows. E3 ubiquitin-protein ligase that mediates monoubiquitination of 'Lys-118' of histone H2A, thereby playing a central role in histone code and gene regulation. H2A 'Lys-118' ubiquitination gives a specific tag for epigenetic transcriptional repression. Polycomb group (PcG) protein. PcG proteins act by forming multiprotein complexes, which are required to maintain the transcriptionally repressive state of homeotic genes throughout development. PcG proteins are not required to initiate repression, but to maintain it during later stages of development. PcG complexes act via modification of histones, such as methylation, deacetylation, ubiquitination rendering chromatin heritably changed in its expressibility. May play a role in meiotic sister chromatid cohesion. The polypeptide is E3 ubiquitin-protein ligase RING1 (Sce) (Drosophila melanogaster (Fruit fly)).